The sequence spans 637 residues: Biosynthetic arginine decarboxylase (637 aa).

At Lys-110 the chain carries N6-(pyridoxal phosphate)lysine. A substrate-binding site is contributed by 290 to 300 (IDVGGGLGVDY).

The protein belongs to the Orn/Lys/Arg decarboxylase class-II family. SpeA subfamily. It depends on Mg(2+) as a cofactor. Requires pyridoxal 5'-phosphate as cofactor.

The enzyme catalyses L-arginine + H(+) = agmatine + CO2. Functionally, catalyzes the biosynthesis of agmatine from arginine. This chain is Biosynthetic arginine decarboxylase, found in Pseudomonas putida (strain ATCC 47054 / DSM 6125 / CFBP 8728 / NCIMB 11950 / KT2440).